We begin with the raw amino-acid sequence, 266 residues long: uncharacterized protein (266 aa).

8 helical membrane-spanning segments follow: residues 9–29 (IAALLAVLSISMVLGIDLFIF), 37–57 (TMPHLGVGVLVAQLISLLVFY), 69–89 (LIKVNMTFAIYWAVWLLISLL), 123–143 (FLLMAALIAGLGCLSYLMIFT), 153–173 (YNPFAPILSGVILANLVLVIA), 184–204 (LPLAMIILLALNALAMFLFLL), 216–236 (SVFAYIIYFVCHFVIAAILIL), and 246–266 (TNSLFILLFIAVCLPLWMVFV).

The protein localises to the cell membrane. This is an uncharacterized protein from Haemophilus influenzae (strain ATCC 51907 / DSM 11121 / KW20 / Rd).